We begin with the raw amino-acid sequence, 728 residues long: 1,4-alpha-glucan branching enzyme GlgB (728 aa).

Aspartate 405 functions as the Nucleophile in the catalytic mechanism. The active-site Proton donor is the glutamate 458.

Belongs to the glycosyl hydrolase 13 family. GlgB subfamily. In terms of assembly, monomer.

It catalyses the reaction Transfers a segment of a (1-&gt;4)-alpha-D-glucan chain to a primary hydroxy group in a similar glucan chain.. It participates in glycan biosynthesis; glycogen biosynthesis. Functionally, catalyzes the formation of the alpha-1,6-glucosidic linkages in glycogen by scission of a 1,4-alpha-linked oligosaccharide from growing alpha-1,4-glucan chains and the subsequent attachment of the oligosaccharide to the alpha-1,6 position. The polypeptide is 1,4-alpha-glucan branching enzyme GlgB (Citrobacter koseri (strain ATCC BAA-895 / CDC 4225-83 / SGSC4696)).